A 443-amino-acid chain; its full sequence is Xaa-Pro dipeptidase (443 aa).

5 residues coordinate Mn(2+): aspartate 246, aspartate 257, histidine 339, glutamate 384, and glutamate 423.

Belongs to the peptidase M24B family. Bacterial-type prolidase subfamily. Mn(2+) serves as cofactor.

The catalysed reaction is Xaa-L-Pro dipeptide + H2O = an L-alpha-amino acid + L-proline. Its function is as follows. Splits dipeptides with a prolyl residue in the C-terminal position. In Klebsiella pneumoniae subsp. pneumoniae (strain ATCC 700721 / MGH 78578), this protein is Xaa-Pro dipeptidase.